The chain runs to 91 residues: Large ribosomal subunit protein uL22 (91 aa).

The protein belongs to the universal ribosomal protein uL22 family. As to quaternary structure, part of the 50S ribosomal subunit.

Its function is as follows. This protein binds specifically to 23S rRNA; its binding is stimulated by other ribosomal proteins, e.g. L4, L17, and L20. It is important during the early stages of 50S assembly. It makes multiple contacts with different domains of the 23S rRNA in the assembled 50S subunit and ribosome. The globular domain of the protein is located near the polypeptide exit tunnel on the outside of the subunit, while an extended beta-hairpin is found that lines the wall of the exit tunnel in the center of the 70S ribosome. In Ash yellows phytoplasma, this protein is Large ribosomal subunit protein uL22 (rplV).